Consider the following 685-residue polypeptide: Methionine--tRNA ligase (685 aa).

The short motif at 12–22 (PYANGSIHLGH) is the 'HIGH' region element. Residues Cys-143, Cys-146, Cys-156, and Cys-159 each contribute to the Zn(2+) site. The short motif at 339-343 (KMSKS) is the 'KMSKS' region element. Lys-342 is an ATP binding site. Residues 582–685 (DFMKIDMRVA…AGAQPGDKVG (104 aa)) form the tRNA-binding domain.

The protein belongs to the class-I aminoacyl-tRNA synthetase family. MetG type 1 subfamily. In terms of assembly, homodimer. Zn(2+) is required as a cofactor.

The protein resides in the cytoplasm. The catalysed reaction is tRNA(Met) + L-methionine + ATP = L-methionyl-tRNA(Met) + AMP + diphosphate. In terms of biological role, is required not only for elongation of protein synthesis but also for the initiation of all mRNA translation through initiator tRNA(fMet) aminoacylation. In Neisseria meningitidis serogroup A / serotype 4A (strain DSM 15465 / Z2491), this protein is Methionine--tRNA ligase.